Consider the following 583-residue polypeptide: Exonuclease 3'-5' domain-containing protein 2 (583 aa).

Residues 1–11 lie on the Mitochondrial intermembrane side of the membrane; it reads MTRESAVATKR. The helical transmembrane segment at 12–29 threads the bilayer; that stretch reads NWAILAAGVGLVYVLVRH. The Cytoplasmic portion of the chain corresponds to 30-583; it reads RHRLLCPLRR…AGLDAKIKET (554 aa). The region spanning 62–228 is the 3'-5' exonuclease domain; it reads TTQWVLNELK…AIYQKLCRDL (167 aa). A divalent metal cation is bound by residues D83, E85, and D213. Residues 266–281 are compositionally biased toward polar residues; that stretch reads GSGVTRSKGSTQSKSN. A disordered region spans residues 266–286; that stretch reads GSGVTRSKGSTQSKSNKWVPK.

Belongs to the EXD2 family. Homodimer. Mg(2+) is required as a cofactor. It depends on Mn(2+) as a cofactor.

The protein localises to the mitochondrion membrane. In terms of biological role, 3'-5' exoribonuclease required for mitochondrial metabolism. The protein is Exonuclease 3'-5' domain-containing protein 2 of Drosophila melanogaster (Fruit fly).